The sequence spans 72 residues: Brevinin-2GHc (72 aa).

A signal peptide spans 1–22; that stretch reads MFTMKKSLLLLFFLGMISLSLC. A propeptide spanning residues 23-42 is cleaved from the precursor; that stretch reads EQERGADEDEGEVEEQIKRS. An intrachain disulfide couples Cys-64 to Cys-70.

In terms of tissue distribution, expressed by the skin glands.

It is found in the secreted. Functionally, antimicrobial peptide. Active against the Gram-positive bacteria S.aureus FDA209P (MIC=9.8 ug/ml) and B.subtilis ATCC 6633 (MIC&gt;64 ug/ml), and the Gram-negative bacteria E.coli O111 (MIC=19.6 ug/ml) and E.coli ATCC 25922 (MIC=9.8 ug/ml). Not active against the fungus C.albicans. The protein is Brevinin-2GHc of Sylvirana guentheri (Gunther's frog).